The sequence spans 70 residues: Protein SlyX homolog (70 aa).

It belongs to the SlyX family.

The chain is Protein SlyX homolog from Shewanella woodyi (strain ATCC 51908 / MS32).